A 197-amino-acid chain; its full sequence is MDVSIEKIKNLRASTGAGMLDCKNALEEADGDIDKAVEILRKKGAIKAAKKAGRVTNEGIVYSYIHHNEKIGVLLLLGCETDFVARTEDFHDLAKKISLQIASMNPKWISREDVPQEIIDKEKEIYLEELKNSNKPENIKEQIVENKLGKFYSENCLLEQEYVFGEGESIKDIIDSMIAKVGENITVDKFARFAIGE.

The segment at 81-84 (TDFV) is involved in Mg(2+) ion dislocation from EF-Tu.

It belongs to the EF-Ts family.

It is found in the cytoplasm. Its function is as follows. Associates with the EF-Tu.GDP complex and induces the exchange of GDP to GTP. It remains bound to the aminoacyl-tRNA.EF-Tu.GTP complex up to the GTP hydrolysis stage on the ribosome. The protein is Elongation factor Ts of Petrotoga mobilis (strain DSM 10674 / SJ95).